A 162-amino-acid polypeptide reads, in one-letter code: Ribosome maturation factor RimP (162 aa).

The protein belongs to the RimP family.

The protein localises to the cytoplasm. In terms of biological role, required for maturation of 30S ribosomal subunits. This Streptococcus gordonii (strain Challis / ATCC 35105 / BCRC 15272 / CH1 / DL1 / V288) protein is Ribosome maturation factor RimP.